Consider the following 355-residue polypeptide: Protein ATP1B4 (355 aa).

Residues 1-108 (MRRQLRSRRA…SLARTGQSWS (108 aa)) are Nuclear-facing. Residues 33–77 (ADEEEEAEEEARVMVVPDLEEEEEEEEEKEEEEKEEEDSHSQETD) are disordered. Over residues 50–68 (DLEEEEEEEEEKEEEEKEE) the composition is skewed to acidic residues. Residues 109–129 (LILVIYFFFYASLAAVITLCM) traverse the membrane as a helical; Signal-anchor for type II membrane protein segment. The Perinuclear space portion of the chain corresponds to 130–355 (YTLFLTISPY…RVIFTLNIET (226 aa)).

The protein belongs to the X(+)/potassium ATPases subunit beta family. As to quaternary structure, associates with a SMAD7-transcriptional complex. Interacts with SNW1 and TOR1AIP1. Does not associate with known Na,K-ATPase alpha-subunits.

The protein resides in the nucleus inner membrane. Its function is as follows. May act as a transcriptional coregulator during muscle development through its interaction with SNW1. Has lost its ancestral function as a Na,K-ATPase beta-subunit. The polypeptide is Protein ATP1B4 (ATP1B4) (Bos taurus (Bovine)).